The sequence spans 179 residues: uncharacterized protein (179 aa).

A compositionally biased stretch (low complexity) spans 26–39 (AAKLAAATTPTHTA). Positions 26–179 (AAKLAAATTP…RPRRNTLRHM (154 aa)) are disordered. The segment covering 150–165 (RQSVTQSTAARQTQPH) has biased composition (polar residues). The span at 167–179 (GRPRPRRNTLRHM) shows a compositional bias: basic residues.

This is an uncharacterized protein from Equus caballus (Horse).